A 320-amino-acid chain; its full sequence is Cytochrome f (320 aa).

The N-terminal stretch at 1-35 is a signal peptide; that stretch reads MQTRNTFSWIREEITRSISVSLMIYIITWASISSA. The heme site is built by Tyr-36, Cys-56, Cys-59, and His-60. The chain crosses the membrane as a helical span at residues 286 to 306; it reads VQGLLFFLGSVVLAQIFLVLK.

It belongs to the cytochrome f family. As to quaternary structure, the 4 large subunits of the cytochrome b6-f complex are cytochrome b6, subunit IV (17 kDa polypeptide, petD), cytochrome f and the Rieske protein, while the 4 small subunits are PetG, PetL, PetM and PetN. The complex functions as a dimer. Heme serves as cofactor.

The protein resides in the plastid. It localises to the chloroplast thylakoid membrane. Component of the cytochrome b6-f complex, which mediates electron transfer between photosystem II (PSII) and photosystem I (PSI), cyclic electron flow around PSI, and state transitions. This Crucihimalaya wallichii (Rock-cress) protein is Cytochrome f.